Here is a 569-residue protein sequence, read N- to C-terminus: MLO-like protein 10 (569 aa).

Over 1–41 (MATRCFWCWTTLLFCSQLLTGFARASSAGGAKEKGLSQTPT) the chain is Extracellular. A helical membrane pass occupies residues 42-62 (WAVALVCTFFILVSVLLEKAL). Over 63 to 85 (HRVATWLWEKHKNSLLEALEKIK) the chain is Cytoplasmic. The helical transmembrane segment at 86 to 106 (AELMILGFISLLLTFGEQYIL) threads the bilayer. Residues 107–163 (KICIPEKAAASMLPCPAPSTHDQDKTHRRRLAAATTSSRCDEGHEPLIPATGLHQLH) lie on the Extracellular side of the membrane. Residues 164–184 (ILLFFMAAFHILYSFITMMLG) traverse the membrane as a helical segment. Residues 185 to 286 (RLKIRGWKKW…IKRSLEDDFK (102 aa)) lie on the Cytoplasmic side of the membrane. A helical membrane pass occupies residues 287–307 (VVVGISPLLWASFVIFLLLNV). Position 308 (Asn-308) is a topological domain, extracellular. Residues 309-329 (GWEALFWASILPVLIILAVST) form a helical membrane-spanning segment. The Cytoplasmic segment spans residues 330–372 (KLQAILTRMALGITERHAVVQGIPLVHGSDKYFWFNRPQLLLH). The helical transmembrane segment at 373-393 (LLHFALFQNAFQLTYFFWVWY) threads the bilayer. Residues 394–413 (SFGLKSCFHTDFKLVIVKLS) are Extracellular-facing. A helical transmembrane segment spans residues 414 to 434 (LGVGALILCSYITLPLYALVT). Topologically, residues 435–569 (QMGSNMKKAV…VKNVPANDID (135 aa)) are cytoplasmic. Residues 447–468 (EQMAKALKKWHMTVKKKKGKAR) are calmodulin-binding.

It belongs to the MLO family.

The protein resides in the membrane. In terms of biological role, may be involved in modulation of pathogen defense and leaf cell death. Activity seems to be regulated by Ca(2+)-dependent calmodulin binding and seems not to require heterotrimeric G proteins. The polypeptide is MLO-like protein 10 (MLO10) (Arabidopsis thaliana (Mouse-ear cress)).